The primary structure comprises 215 residues: Urease accessory protein UreG (215 aa).

Residues 1-21 (MNAPASSPARRTKKLPPLRVG) form a disordered region. Residue 24–31 (GPVGSGKT) coordinates GTP.

The protein belongs to the SIMIBI class G3E GTPase family. UreG subfamily. As to quaternary structure, homodimer. UreD, UreF and UreG form a complex that acts as a GTP-hydrolysis-dependent molecular chaperone, activating the urease apoprotein by helping to assemble the nickel containing metallocenter of UreC. The UreE protein probably delivers the nickel.

The protein localises to the cytoplasm. In terms of biological role, facilitates the functional incorporation of the urease nickel metallocenter. This process requires GTP hydrolysis, probably effectuated by UreG. This is Urease accessory protein UreG from Burkholderia vietnamiensis (strain G4 / LMG 22486) (Burkholderia cepacia (strain R1808)).